A 700-amino-acid polypeptide reads, in one-letter code: Elongation factor G (700 aa).

The tr-type G domain maps to Thr-10–Leu-286. GTP is bound by residues Ala-19–Thr-26, Asp-83–His-87, and Asn-137–Asp-140.

The protein belongs to the TRAFAC class translation factor GTPase superfamily. Classic translation factor GTPase family. EF-G/EF-2 subfamily.

It is found in the cytoplasm. Functionally, catalyzes the GTP-dependent ribosomal translocation step during translation elongation. During this step, the ribosome changes from the pre-translocational (PRE) to the post-translocational (POST) state as the newly formed A-site-bound peptidyl-tRNA and P-site-bound deacylated tRNA move to the P and E sites, respectively. Catalyzes the coordinated movement of the two tRNA molecules, the mRNA and conformational changes in the ribosome. The chain is Elongation factor G from Saccharopolyspora erythraea (strain ATCC 11635 / DSM 40517 / JCM 4748 / NBRC 13426 / NCIMB 8594 / NRRL 2338).